The chain runs to 693 residues: Serine/threonine-protein kinase Pkn1 (693 aa).

One can recognise a Protein kinase domain in the interval 59 to 328 (FRLVRRLGRG…QVALAEHVRV (270 aa)). ATP is bound by residues 65–73 (LGRGGMGAV) and Lys-88. Catalysis depends on Asp-180, which acts as the Proton acceptor. The 99-residue stretch at 393–491 (LVEVPVQVVL…LKAAVDALLQ (99 aa)) folds into the PilZ domain. One copy of the TPR repeat lies at 630–663 (ARSHFQSGGALERDGQLSQALDQYERGLKLAPLE).

It belongs to the protein kinase superfamily. Ser/Thr protein kinase family. Autophosphorylated.

The enzyme catalyses L-seryl-[protein] + ATP = O-phospho-L-seryl-[protein] + ADP + H(+). It catalyses the reaction L-threonyl-[protein] + ATP = O-phospho-L-threonyl-[protein] + ADP + H(+). With respect to regulation, may be regulated by calcium or a calmodulin-like protein. In terms of biological role, plays an essential role in proper timing of early development events. In Myxococcus xanthus, this protein is Serine/threonine-protein kinase Pkn1 (pkn1).